Here is a 119-residue protein sequence, read N- to C-terminus: Large ribosomal subunit protein uL18 (119 aa).

A disordered region spans residues 54–76 (LTSASTLADDVEGETPTEESRSV).

The protein belongs to the universal ribosomal protein uL18 family. As to quaternary structure, part of the 50S ribosomal subunit; part of the 5S rRNA/L5/L18/L25 subcomplex. Contacts the 5S and 23S rRNAs.

In terms of biological role, this is one of the proteins that bind and probably mediate the attachment of the 5S RNA into the large ribosomal subunit, where it forms part of the central protuberance. The chain is Large ribosomal subunit protein uL18 from Salinibacter ruber (strain DSM 13855 / M31).